A 291-amino-acid polypeptide reads, in one-letter code: Beta-lactamase CTX-M-97 (291 aa).

An N-terminal signal peptide occupies residues 1-28 (MMTQSIGRSMLTVMATLPLLFSSATLHA). The active-site Acyl-ester intermediate is the serine 73. 237–239 (KTG) provides a ligand contact to substrate.

It belongs to the class-A beta-lactamase family.

It catalyses the reaction a beta-lactam + H2O = a substituted beta-amino acid. Its function is as follows. Is probably capable of hydrolyzing cephalosporins such as ceftriaxone and ceftazidime, thus conferring resistance to these antibiotics. The sequence is that of Beta-lactamase CTX-M-97 (bla) from Escherichia coli.